A 339-amino-acid chain; its full sequence is MTRILLLLHPTAVTDEQLVTKVKSEISSTNSDADVVQHIIDRVANKIVKLENNTFDEVIYINPNEGEFNRQLPVSTITIIYDSLVEDGVLKGDLPTNQNLDAIMSGFIVGEQGNWIKPKAVGESVSIPLKKKEVAVGGASKQCLPSFKKLSSTHAAVGLTDTSASNTDEENDDVNSKRKLQETKLAYFSESDDEDEEDQIIDENNLISEVRTANLVVPKKCELPNGKKRRKACKDCTCGLKEIEAQETSDKSTLQNSILNQMVQSANLEAMKIEEKMKNAVKFDDNDLAEIDFTVEGKKGGCSSCSLGDAFRCDGCPYLGLPPFKPGEVVSIDNFGEDI.

The interval 1–157 is N-terminal SAM-like domain; that stretch reads MTRILLLLHP…KKLSSTHAAV (157 aa). The segment at 158–206 is linker; that stretch reads GLTDTSASNTDEENDDVNSKRKLQETKLAYFSESDDEDEEDQIIDENNL. The [2Fe-2S] cluster site is built by Cys221, Cys233, Cys236, and Cys238. The fe-S binding site A stretch occupies residues 221–238; the sequence is CELPNGKKRRKACKDCTC. [4Fe-4S] cluster-binding residues include Cys302, Cys305, Cys313, and Cys316. Short sequence motifs (cx2C motif) lie at residues 302–305 and 313–316; these read CSSC and CDGC. The tract at residues 302–316 is fe-S binding site B; the sequence is CSSCSLGDAFRCDGC.

It belongs to the anamorsin family. Monomer. Interacts with TAH18. Interacts with MIA40. The cofactor is [2Fe-2S] cluster. [4Fe-4S] cluster is required as a cofactor.

It is found in the cytoplasm. It localises to the mitochondrion intermembrane space. Its function is as follows. Component of the cytosolic iron-sulfur (Fe-S) protein assembly (CIA) machinery required for the maturation of extramitochondrial Fe-S proteins. Part of an electron transfer chain functioning in an early step of cytosolic Fe-S biogenesis, facilitating the de novo assembly of a [4Fe-4S] cluster on the scaffold complex CFD1-NBP35. Electrons are transferred to DRE2 from NADPH via the FAD- and FMN-containing protein TAH18. TAH18-DRE2 are also required for the assembly of the diferric tyrosyl radical cofactor of ribonucleotide reductase (RNR), probably by providing electrons for reduction during radical cofactor maturation in the catalytic small subunit RNR2. This is Fe-S cluster assembly protein DRE2 from Debaryomyces hansenii (strain ATCC 36239 / CBS 767 / BCRC 21394 / JCM 1990 / NBRC 0083 / IGC 2968) (Yeast).